Reading from the N-terminus, the 40-residue chain is MLVVIMFFIAFAFCSWLSYSYLRPYISTKELNKSRMFYIT.

A helical membrane pass occupies residues 2 to 22; it reads LVVIMFFIAFAFCSWLSYSYL. Over 23-40 the chain is Virion surface; that stretch reads RPYISTKELNKSRMFYIT.

The protein belongs to the orthopoxvirus OPG076 family. Component of the entry fusion complex (EFC) composed of OPG053, OPG076, OPG086, OPG094, OPG095, OPG099, OPG107, OPG143, OPG104, OPG147 and OPG155. Except for OPG095 and OPG053, each of the EFC proteins is required for assembly or stability of the complex. Post-translationally, unglycosylated because produced in viral factories instead of the classic ER -Golgi route.

Its subcellular location is the virion membrane. Its function is as follows. Component of the entry fusion complex (EFC), which consists of 11 proteins. During cell infection, this complex mediates entry of the virion core into the host cytoplasm by a two-step mechanism consisting of lipid mixing of the viral and cellular membranes and subsequent pore formation. This chain is Entry-fusion complex protein OPG076 (OPG076), found in Variola virus (isolate Human/India/Ind3/1967) (VARV).